A 555-amino-acid polypeptide reads, in one-letter code: Glucose-6-phosphate isomerase (555 aa).

Catalysis depends on glutamate 355, which acts as the Proton donor. Active-site residues include histidine 386 and lysine 514.

This sequence belongs to the GPI family.

Its subcellular location is the cytoplasm. The catalysed reaction is alpha-D-glucose 6-phosphate = beta-D-fructose 6-phosphate. It functions in the pathway carbohydrate biosynthesis; gluconeogenesis. Its pathway is carbohydrate degradation; glycolysis; D-glyceraldehyde 3-phosphate and glycerone phosphate from D-glucose: step 2/4. Functionally, catalyzes the reversible isomerization of glucose-6-phosphate to fructose-6-phosphate. This chain is Glucose-6-phosphate isomerase, found in Buchnera aphidicola subsp. Schizaphis graminum (strain Sg).